A 110-amino-acid chain; its full sequence is Hydrogenase maturation factor HypA (110 aa).

Ni(2+) is bound at residue histidine 2. Positions 70, 73, 86, and 89 each coordinate Zn(2+).

The protein belongs to the HypA/HybF family.

Its function is as follows. Involved in the maturation of [NiFe] hydrogenases. Required for nickel insertion into the metal center of the hydrogenase. The polypeptide is Hydrogenase maturation factor HypA (Geobacter metallireducens (strain ATCC 53774 / DSM 7210 / GS-15)).